Consider the following 184-residue polypeptide: Alpha-tubulin N-acetyltransferase (184 aa).

The region spanning 1 to 174 (MNIPPEKMHN…NNFVIFAEYF (174 aa)) is the N-acetyltransferase domain. Residues 108-121 (FYIQ…GLGL) and 144-153 (SYKLQSFLKK) contribute to the acetyl-CoA site.

Belongs to the acetyltransferase ATAT1 family.

It carries out the reaction L-lysyl-[alpha-tubulin] + acetyl-CoA = N(6)-acetyl-L-lysyl-[alpha-tubulin] + CoA + H(+). Functionally, specifically acetylates 'Lys-40' in alpha-tubulin on the lumenal side of microtubules. Promotes microtubule destabilization and accelerates microtubule dynamics; this activity may be independent of acetylation activity. Acetylates alpha-tubulin with a slow enzymatic rate, due to a catalytic site that is not optimized for acetyl transfer. Enters the microtubule through each end and diffuses quickly throughout the lumen of microtubules. Acetylates only long/old microtubules because of its slow acetylation rate since it does not have time to act on dynamically unstable microtubules before the enzyme is released. In Plasmodium knowlesi (strain H), this protein is Alpha-tubulin N-acetyltransferase.